The primary structure comprises 160 residues: Major strawberry allergen Fra a 1-2 (160 aa).

It belongs to the BetVI family. As to quaternary structure, monomer. Interacts with AP. Highly expressed in ripe red fruits. Expressed in roots and white fruits. Expressed at low levels in open flowers.

Involved in the control of flavonoid biosynthesis in fruits, probably by binding directly to natural flavonoids. Binds the natural flavonoid myricetin with affinities in the low micromolar range. The chain is Major strawberry allergen Fra a 1-2 from Fragaria ananassa (Strawberry).